Consider the following 230-residue polypeptide: MKLCIALDNPSKEENLKLAKELKEYAKELWLKVGFRSYIRDGAEFIKELKLMGYNVFLDLKLYDIPNTMADAAEEIANLGVDMFNVHASAGSIALKTVMQRLEKYEKRPLVLAVTALTSFTDEEFKKIYGDSIENKAKEFAKLSHEAGLDGVVCSAFESKMIKNITDEKFITLTPGIRPFGEDAGDQARVADISLAKEQKVDFIVVGRPIYKDEDPKAKVEKILNKIKEI.

Substrate is bound by residues aspartate 8, lysine 32, aspartate 59–threonine 68, threonine 118, arginine 178, glutamine 187, glycine 207, and arginine 208. The active-site Proton donor is lysine 61.

It belongs to the OMP decarboxylase family. Type 1 subfamily. Homodimer.

The catalysed reaction is orotidine 5'-phosphate + H(+) = UMP + CO2. It participates in pyrimidine metabolism; UMP biosynthesis via de novo pathway; UMP from orotate: step 2/2. In terms of biological role, catalyzes the decarboxylation of orotidine 5'-monophosphate (OMP) to uridine 5'-monophosphate (UMP). The protein is Orotidine 5'-phosphate decarboxylase of Nautilia profundicola (strain ATCC BAA-1463 / DSM 18972 / AmH).